Here is a 29-residue protein sequence, read N- to C-terminus: Cyclotide mra2 (29 aa).

Disulfide bonds link C4–C19, C8–C21, and C13–C26.

Post-translationally, this is a cyclic peptide. Contains 3 disulfide bonds.

Functionally, probably participates in a plant defense mechanism. The sequence is that of Cyclotide mra2 from Melicytus ramiflorus (Whitey wood).